A 396-amino-acid chain; its full sequence is Serine/threonine-protein kinase VRK1 (396 aa).

Positions 37 to 317 (WKVGLPIGQG…LLDYTEKPLY (281 aa)) constitute a Protein kinase domain. Residues 43-51 (IGQGGFGCI) and Lys-71 contribute to the ATP site. A Glycyl lysine isopeptide (Lys-Gly) (interchain with G-Cter in SUMO2) cross-link involves residue Lys-71. The active-site Proton acceptor is the Asp-177. Position 342 is a phosphoserine; by PLK3 (Ser-342). Residues 354-396 (ITKKRKKEIEESKEPGVEDTEWSNTQTEEAIQTRSRTRKRVQK) form a disordered region. A Phosphothreonine; by autocatalysis modification is found at Thr-355. Basic and acidic residues predominate over residues 360-369 (KEIEESKEPG). A compositionally biased stretch (polar residues) spans 375–387 (WSNTQTEEAIQTR). Ser-376 carries the phosphoserine modification. Thr-378 is modified (phosphothreonine). Residues 387–393 (RSRTRKR) are required for interaction with the nucleosome.

The protein belongs to the protein kinase superfamily. CK1 Ser/Thr protein kinase family. VRK subfamily. Interacts with HDAC1, KAT2B, SETDB1, KDM3A and KDM4A. Associates with the nucleosome through interactions with nucleosome DNA, histone H2A and histone H2B; the interaction with H2A and H2B is mediated by the nucleosome acidic patch, a cluster of negatively charged residues of H2A and H2B forming a cleft within the nucleosome core. In terms of assembly, (Microbial infection) Interacts with vaccinia protein B12; this interaction inhibits the repressive activity of the vaccinia virus B12 pseudokinase on viral replication factory formation. Autophosphorylated at various serine and threonine residues. Autophosphorylation does not impair its ability to phosphorylate p53/TP53. Phosphorylation by PLK3 leads to induction of Golgi fragmentation during mitosis. In terms of tissue distribution, widely expressed. Highly expressed in fetal liver, testis and thymus.

It is found in the nucleus. The protein localises to the cytoplasm. It localises to the cajal body. It carries out the reaction L-seryl-[protein] + ATP = O-phospho-L-seryl-[protein] + ADP + H(+). The catalysed reaction is L-threonyl-[protein] + ATP = O-phospho-L-threonyl-[protein] + ADP + H(+). Active in presence of Mn(2+), Mg(2+) and Zn(2+), but is not functional with Ca(2+) or Cu(2+). Has a higher affinity for Mn(2+) than for Mg(2+). RAN inhibits its autophosphorylation and its ability to phosphorylate histone H3. In terms of biological role, serine/threonine kinase involved in the regulation of key cellular processes including the cell cycle, nuclear condensation, transcription regulation, and DNA damage response. Controls chromatin organization and remodeling by mediating phosphorylation of histone H3 on 'Thr-4' and histone H2AX (H2aXT4ph). It also phosphorylates KAT5 in response to DNA damage, promoting KAT5 association with chromatin and histone acetyltransferase activity. Is involved in the regulation of cell cycle progression of neural progenitors, and is required for proper cortical neuronal migration. Is involved in neurite elongation and branching in motor neurons, and has an essential role in Cajal bodies assembly, acting through COIL phosphorylation and the control of coilin degradation. Involved in Golgi disassembly during the cell cycle: following phosphorylation by PLK3 during mitosis, it is required to induce Golgi fragmentation. Phosphorylates BANF1: disrupts its ability to bind DNA, reduces its binding to LEM domain-containing proteins and causes its relocalization from the nucleus to the cytoplasm. Phosphorylates TP53BP1 and p53/TP53 on 'Thr-18', preventing the interaction between p53/TP53 and MDM2. Phosphorylates ATF2 which activates its transcriptional activity. Phosphorylates JUN. The sequence is that of Serine/threonine-protein kinase VRK1 from Homo sapiens (Human).